The sequence spans 291 residues: HTH-type transcriptional activator AmpR (291 aa).

An HTH lysR-type domain is found at Leu-6 to Thr-63. A DNA-binding region (H-T-H motif) is located at residues Phe-23–Lys-42.

Belongs to the LysR transcriptional regulatory family.

Its subcellular location is the cytoplasm. Its function is as follows. This protein is a positive regulator of gene expression of cephalosporinase (AmpC). This chain is HTH-type transcriptional activator AmpR (ampR), found in Enterobacter cloacae.